The chain runs to 381 residues: Carbamoyl phosphate synthase small chain (381 aa).

Residues 1-192 are CPSase; that stretch reads MSKPAILALE…SGYADVSQGD (192 aa). L-glutamine is bound by residues serine 47, glycine 244, and glycine 246. The Glutamine amidotransferase type-1 domain occupies 196–381; it reads HVVAYDYGMK…RFVEMMRHRR (186 aa). Residue cysteine 272 is the Nucleophile of the active site. Leucine 273, glutamine 276, asparagine 314, glycine 316, and phenylalanine 317 together coordinate L-glutamine. Catalysis depends on residues histidine 356 and glutamate 358.

This sequence belongs to the CarA family. In terms of assembly, composed of two chains; the small (or glutamine) chain promotes the hydrolysis of glutamine to ammonia, which is used by the large (or ammonia) chain to synthesize carbamoyl phosphate. Tetramer of heterodimers (alpha,beta)4.

The enzyme catalyses hydrogencarbonate + L-glutamine + 2 ATP + H2O = carbamoyl phosphate + L-glutamate + 2 ADP + phosphate + 2 H(+). The catalysed reaction is L-glutamine + H2O = L-glutamate + NH4(+). It participates in amino-acid biosynthesis; L-arginine biosynthesis; carbamoyl phosphate from bicarbonate: step 1/1. The protein operates within pyrimidine metabolism; UMP biosynthesis via de novo pathway; (S)-dihydroorotate from bicarbonate: step 1/3. Its function is as follows. Small subunit of the glutamine-dependent carbamoyl phosphate synthetase (CPSase). CPSase catalyzes the formation of carbamoyl phosphate from the ammonia moiety of glutamine, carbonate, and phosphate donated by ATP, constituting the first step of 2 biosynthetic pathways, one leading to arginine and/or urea and the other to pyrimidine nucleotides. The small subunit (glutamine amidotransferase) binds and cleaves glutamine to supply the large subunit with the substrate ammonia. This is Carbamoyl phosphate synthase small chain from Halomonas eurihalina.